The following is a 411-amino-acid chain: uncharacterized protein (411 aa).

Disordered regions lie at residues Met-1 to Glu-91 and Lys-253 to Pro-280. The segment covering Glu-46–Met-57 has biased composition (acidic residues). The span at Ser-74 to Ser-86 shows a compositional bias: low complexity. Residues Arg-258–Pro-272 show a composition bias toward basic and acidic residues. Ser-279 carries the phosphoserine modification.

As to expression, widely expressed, highest levels in cerebellum, brain cortex, hippocampus, pons, putamen and amygdala. Highly expressed in neurons, but also present in glial cells. Slightly higher expression in the dorsolateral prefrontal cortex of schizophrenic patients compared to control individuals.

It localises to the cytoplasm. This is an uncharacterized protein from Homo sapiens (Human).